Reading from the N-terminus, the 481-residue chain is Ribulose bisphosphate carboxylase large chain (481 aa).

A propeptide spanning residues M1–S2 is cleaved from the precursor. At P3 the chain carries N-acetylproline. K14 carries the post-translational modification N6,N6,N6-trimethyllysine. The substrate site is built by N123 and T173. K175 (proton acceptor) is an active-site residue. Residue K177 coordinates substrate. 3 residues coordinate Mg(2+): K201, D203, and E204. At K201 the chain carries N6-carboxylysine. The Proton acceptor role is filled by H294. The substrate site is built by R295, H327, and S379.

The protein belongs to the RuBisCO large chain family. Type I subfamily. As to quaternary structure, heterohexadecamer of 8 large chains and 8 small chains; disulfide-linked. The disulfide link is formed within the large subunit homodimers. The cofactor is Mg(2+). Post-translationally, the disulfide bond which can form in the large chain dimeric partners within the hexadecamer appears to be associated with oxidative stress and protein turnover.

It localises to the plastid. It catalyses the reaction 2 (2R)-3-phosphoglycerate + 2 H(+) = D-ribulose 1,5-bisphosphate + CO2 + H2O. The catalysed reaction is D-ribulose 1,5-bisphosphate + O2 = 2-phosphoglycolate + (2R)-3-phosphoglycerate + 2 H(+). Its function is as follows. RuBisCO catalyzes two reactions: the carboxylation of D-ribulose 1,5-bisphosphate, the primary event in carbon dioxide fixation, as well as the oxidative fragmentation of the pentose substrate in the photorespiration process. Both reactions occur simultaneously and in competition at the same active site. This chain is Ribulose bisphosphate carboxylase large chain, found in Cuscuta gronovii (Common dodder).